We begin with the raw amino-acid sequence, 132 residues long: Interleukin-4 (132 aa).

An N-terminal signal peptide occupies residues 1 to 24 (MGLTSQLIPTLVCLLALTSTFVHG). Residues Asn-28, Asn-45, Asn-62, and Asn-101 are each glycosylated (N-linked (GlcNAc...) asparagine). 2 disulfides stabilise this stretch: Cys-48/Cys-84 and Cys-70/Cys-104.

Belongs to the IL-4/IL-13 family.

The protein localises to the secreted. Functionally, participates in at least several B-cell activation processes as well as of other cell types. It is a costimulator of DNA-synthesis. It induces the expression of class II MHC molecules on resting B-cells. It enhances both secretion and cell surface expression of IgE and IgG1. It also regulates the expression of the low affinity Fc receptor for IgE (CD23) on both lymphocytes and monocytes. Positively regulates IL31RA expression in macrophages. Stimulates autophagy in dendritic cells by interfering with mTORC1 signaling and through the induction of RUFY4. The chain is Interleukin-4 (IL4) from Ailuropoda melanoleuca (Giant panda).